Consider the following 539-residue polypeptide: MAAALRVAAVGARLSVLASGLRAAVRSLCSQATSVNERIENKRRTALLGGGQRRIDAQHKRGKLTARERISLLLDPGSFVESDMFVEHRCADFGMAADKNKFPGDSVVTGRGRINGRLVYVFSQDFTVFGGSLSGAHAQKICKIMDQAITVGAPVIGLNDSGGARIQEGVESLAGYADIFLRNVTASGVIPQISLIMGPCAGGAVYSPALTDFTFMVKDTSYLFITGPDVVKSVTNEDVTQEELGGAKTHTTMSGVAHRAFENDVDALCNLRDFFNYLPLSSQDPAPVRECHDPSDRLVPELDTIVPLESTKAYNMVDIIHSVVDEREFFEIMPNYAKNIIVGFARMNGRTVGIVGNQPKVASGCLDINSSVKGARFVRFCDAFNIPLITFVDVPGFLPGTAQEYGGIIRHGAKLLYAFAEATVPKVTVITRKAYGGAYDVMSSKHLCGDTNYAWPTAEIAVMGAKGAVEIIFKGHENVEAAQAEYIEKFANPFPAAVRGFVDDIIQPSSTRARICCDLDVLASKKVQRPWRKHANIPL.

The transit peptide at 1 to 28 (MAAALRVAAVGARLSVLASGLRAAVRSL) directs the protein to the mitochondrion. The CoA carboxyltransferase N-terminal domain maps to 32–290 (ATSVNERIEN…SSQDPAPVRE (259 aa)). The tract at residues 32–533 (ATSVNERIEN…SKKVQRPWRK (502 aa)) is carboxyltransferase. S71 bears the Phosphoserine mark. N6-acetyllysine; alternate is present on K99. Residue K99 is modified to N6-succinyllysine; alternate. The residue at position 248 (K248) is an N6-succinyllysine. A CoA carboxyltransferase C-terminal domain is found at 294–533 (PSDRLVPELD…SKKVQRPWRK (240 aa)). Residues 325–358 (DEREFFEIMPNYAKNIIVGFARMNGRTVGIVGNQ) form an acyl-CoA binding region. N6-acetyllysine; alternate occurs at positions 474 and 489. An N6-succinyllysine; alternate mark is found at K474 and K489.

The protein belongs to the AccD/PCCB family. The holoenzyme is a dodecamer composed of 6 PCCA/alpha subunits and 6 PCCB/beta subunits.

It localises to the mitochondrion matrix. The catalysed reaction is propanoyl-CoA + hydrogencarbonate + ATP = (S)-methylmalonyl-CoA + ADP + phosphate + H(+). It catalyses the reaction butanoyl-CoA + hydrogencarbonate + ATP = (2S)-ethylmalonyl-CoA + ADP + phosphate + H(+). It functions in the pathway metabolic intermediate metabolism; propanoyl-CoA degradation; succinyl-CoA from propanoyl-CoA: step 1/3. This is one of the 2 subunits of the biotin-dependent propionyl-CoA carboxylase (PCC), a mitochondrial enzyme involved in the catabolism of odd chain fatty acids, branched-chain amino acids isoleucine, threonine, methionine, and valine and other metabolites. Propionyl-CoA carboxylase catalyzes the carboxylation of propionyl-CoA/propanoyl-CoA to D-methylmalonyl-CoA/(S)-methylmalonyl-CoA. Within the holoenzyme, the alpha subunit catalyzes the ATP-dependent carboxylation of the biotin carried by the biotin carboxyl carrier (BCC) domain, while the beta subunit then transfers the carboxyl group from carboxylated biotin to propionyl-CoA. Propionyl-CoA carboxylase also significantly acts on butyryl-CoA/butanoyl-CoA, which is converted to ethylmalonyl-CoA/(2S)-ethylmalonyl-CoA at a much lower rate. Other alternative minor substrates include (2E)-butenoyl-CoA/crotonoyl-CoA. The protein is Propionyl-CoA carboxylase beta chain, mitochondrial of Homo sapiens (Human).